Reading from the N-terminus, the 101-residue chain is Protein S100-A3 (101 aa).

EF-hand domains lie at 12–47 (IVCTFQEYAGRCGDKYKICQSELKELLQKELPTWTP) and 50–85 (FRECDYNKFMSVLDTNKDCEVDFGEYVRSLASLCLY). A Ca(2+)-binding site is contributed by Lys26. A disulfide bond links Cys30 and Cys68. A Citrulline; by PAD3 modification is found at Arg51. Residues Asp63, Asn65, Asp67, Glu69, and Glu74 each contribute to the Ca(2+) site. Zn(2+) contacts are provided by Cys83, Cys86, His87, and Cys93.

Belongs to the S-100 family. As to quaternary structure, homodimer and homotetramer for the citrullinated form. More than half of the arginine residues undergo citrullination by PAD1 and PAD2. Arg-51 is specifically citrullinated by PAD3 and promotes tetramerization. As to expression, skin specific, specifically expressed in cuticle of pelage follicle.

The protein localises to the cytoplasm. Functionally, binds both calcium and zinc. May be involved in calcium-dependent cuticle cell differentiation, hair shaft and hair cuticular barrier formation. The sequence is that of Protein S100-A3 (S100a3) from Mus musculus (Mouse).